A 98-amino-acid chain; its full sequence is NADH-ubiquinone oxidoreductase chain 4L (98 aa).

3 helical membrane-spanning segments follow: residues 1–21 (MTPV…GLAF), 29–49 (ALLC…LWAL), and 58–78 (VAPM…LALL).

The protein belongs to the complex I subunit 4L family.

It localises to the mitochondrion membrane. It catalyses the reaction a ubiquinone + NADH + 5 H(+)(in) = a ubiquinol + NAD(+) + 4 H(+)(out). Functionally, core subunit of the mitochondrial membrane respiratory chain NADH dehydrogenase (Complex I) which catalyzes electron transfer from NADH through the respiratory chain, using ubiquinone as an electron acceptor. Part of the enzyme membrane arm which is embedded in the lipid bilayer and involved in proton translocation. The chain is NADH-ubiquinone oxidoreductase chain 4L (MT-ND4L) from Salmo salar (Atlantic salmon).